Here is a 623-residue protein sequence, read N- to C-terminus: Serine/threonine-protein kinase ArnS (623 aa).

The next 2 membrane-spanning stretches (helical) occupy residues 13–33 and 49–69; these read MILI…GIVL and VYLI…QSLI. Residues 317–623 form the Protein kinase domain; it reads YRVIEVIGLG…SYDIVKILEG (307 aa). Residues 323 to 331 and Lys-344 contribute to the ATP site; that span reads IGLGGNGYV. Asp-460 functions as the Proton acceptor in the catalytic mechanism.

The protein belongs to the protein kinase superfamily. Ser/Thr protein kinase family. Autophosphorylated.

Its subcellular location is the cell membrane. The enzyme catalyses L-seryl-[protein] + ATP = O-phospho-L-seryl-[protein] + ADP + H(+). It catalyses the reaction L-threonyl-[protein] + ATP = O-phospho-L-threonyl-[protein] + ADP + H(+). Autophosphorylation is stimulated by Mn(2+). Its function is as follows. Plays an essential role in the controlled expression of archaellum components during starvation-induced motility. May inhibit arnR transcription and promote ArnR translation. The chain is Serine/threonine-protein kinase ArnS from Sulfolobus acidocaldarius (strain ATCC 33909 / DSM 639 / JCM 8929 / NBRC 15157 / NCIMB 11770).